The following is a 207-amino-acid chain: LexA repressor (207 aa).

A DNA-binding region (H-T-H motif) is located at residues 29-49 (VREICSAVDLSSTSTVHGHLA). Residues Ser128 and Lys166 each act as for autocatalytic cleavage activity in the active site.

This sequence belongs to the peptidase S24 family. In terms of assembly, homodimer.

It catalyses the reaction Hydrolysis of Ala-|-Gly bond in repressor LexA.. Functionally, represses a number of genes involved in the response to DNA damage (SOS response), including recA and lexA. In the presence of single-stranded DNA, RecA interacts with LexA causing an autocatalytic cleavage which disrupts the DNA-binding part of LexA, leading to derepression of the SOS regulon and eventually DNA repair. This Lactobacillus johnsonii (strain CNCM I-12250 / La1 / NCC 533) protein is LexA repressor.